The chain runs to 402 residues: Argininosuccinate synthase (402 aa).

ATP contacts are provided by residues 10–18 (AYSGGVDTS) and Ala-38. Tyr-89 provides a ligand contact to L-citrulline. Gly-119 is an ATP binding site. Residues Thr-121, Asn-125, and Asp-126 each coordinate L-aspartate. Asn-125 is an L-citrulline binding site. Arg-129, Ser-177, Ser-186, Glu-262, and Tyr-274 together coordinate L-citrulline.

This sequence belongs to the argininosuccinate synthase family. Type 1 subfamily. As to quaternary structure, homotetramer.

It is found in the cytoplasm. It catalyses the reaction L-citrulline + L-aspartate + ATP = 2-(N(omega)-L-arginino)succinate + AMP + diphosphate + H(+). It functions in the pathway amino-acid biosynthesis; L-arginine biosynthesis; L-arginine from L-ornithine and carbamoyl phosphate: step 2/3. The sequence is that of Argininosuccinate synthase from Prochlorococcus marinus (strain SARG / CCMP1375 / SS120).